Here is a 588-residue protein sequence, read N- to C-terminus: Probable urocanate hydratase (588 aa).

A compositionally biased stretch (low complexity) spans 1–15 (MDTPSAAAETSEPSA). Positions 1–22 (MDTPSAAAETSEPSAQWQAYRG) are disordered. NAD(+)-binding positions include 62-63 (GG), glutamine 140, 188-190 (GMG), glutamate 208, arginine 213, 254-255 (NA), 275-279 (QTSAH), and tyrosine 334. The active site involves cysteine 431. An NAD(+)-binding site is contributed by glycine 520.

It belongs to the urocanase family. It depends on NAD(+) as a cofactor.

It localises to the cytoplasm. The catalysed reaction is 4-imidazolone-5-propanoate = trans-urocanate + H2O. It functions in the pathway amino-acid degradation; L-histidine degradation into L-glutamate; N-formimidoyl-L-glutamate from L-histidine: step 2/3. In terms of biological role, catalyzes the conversion of urocanate to 4-imidazolone-5-propionate. The sequence is that of Probable urocanate hydratase from Halobacterium salinarum (strain ATCC 29341 / DSM 671 / R1).